Reading from the N-terminus, the 172-residue chain is Ribosome maturation factor RimM (172 aa).

One can recognise a PRC barrel domain in the interval E96–L168.

This sequence belongs to the RimM family. In terms of assembly, binds ribosomal protein uS19.

The protein localises to the cytoplasm. Its function is as follows. An accessory protein needed during the final step in the assembly of 30S ribosomal subunit, possibly for assembly of the head region. Essential for efficient processing of 16S rRNA. May be needed both before and after RbfA during the maturation of 16S rRNA. It has affinity for free ribosomal 30S subunits but not for 70S ribosomes. This is Ribosome maturation factor RimM from Streptococcus pyogenes serotype M18 (strain MGAS8232).